The following is a 454-amino-acid chain: GTPase Obg (454 aa).

The Obg domain occupies 2–159 (SDFVDEAVLH…VDIRLELKTI (158 aa)). Residues 60–87 (YQRRPHRKAENGAPGQGSNRSGASGADL) are disordered. Residues 160–335 (ADVGLVGFPS…LAYALGEQVA (176 aa)) enclose the OBG-type G domain. GTP-binding positions include 166 to 173 (GFPSAGKS), 191 to 195 (FTTLV), 212 to 215 (DVPG), 287 to 290 (NKID), and 316 to 318 (SAA). Residues Ser173 and Thr193 each coordinate Mg(2+). The OCT domain maps to 353–435 (PREIGEIPFQ…DNPVVFDWDP (83 aa)).

Belongs to the TRAFAC class OBG-HflX-like GTPase superfamily. OBG GTPase family. As to quaternary structure, monomer. Mg(2+) serves as cofactor.

It is found in the cytoplasm. In terms of biological role, an essential GTPase which binds GTP, GDP and possibly (p)ppGpp with moderate affinity, with high nucleotide exchange rates and a fairly low GTP hydrolysis rate. Plays a role in control of the cell cycle, stress response, ribosome biogenesis and in those bacteria that undergo differentiation, in morphogenesis control. This chain is GTPase Obg, found in Thermobifida fusca (strain YX).